Here is a 341-residue protein sequence, read N- to C-terminus: Heat-inducible transcription repressor HrcA (341 aa).

This sequence belongs to the HrcA family.

Its function is as follows. Negative regulator of class I heat shock genes (grpE-dnaK-dnaJ and groELS operons). Prevents heat-shock induction of these operons. The sequence is that of Heat-inducible transcription repressor HrcA from Carboxydothermus hydrogenoformans (strain ATCC BAA-161 / DSM 6008 / Z-2901).